The following is a 233-amino-acid chain: 4'-phosphopantetheinyl transferase psf-1 (233 aa).

Mg(2+)-binding residues include Asp-110, Glu-112, and Glu-154. Residues 161-192 (GKGISYGLSSFTARLSEDGQATLRLPDHEAPC) are peptidyl carrier protein binding.

Belongs to the P-Pant transferase superfamily. Gsp/Sfp/HetI/AcpT family. The cofactor is Mg(2+).

It catalyses the reaction apo-[peptidyl-carrier protein] + CoA = holo-[peptidyl-carrier protein] + adenosine 3',5'-bisphosphate + H(+). Functionally, probably activates the peptidyl carrier protein (PCP) domains of surfactin synthetase by transferring the 4'-phosphopantetheinyl moiety of coenzyme A (CoA) to a serine residue. Required for the production of the lipopeptide antibiotic, surfactin. This chain is 4'-phosphopantetheinyl transferase psf-1 (psf-1), found in Bacillus pumilus (Bacillus mesentericus).